The chain runs to 244 residues: Carboxy-S-adenosyl-L-methionine synthase (244 aa).

S-adenosyl-L-methionine is bound by residues Tyr38, 63–65 (GCS), 88–89 (DN), 116–117 (DI), Asn131, and Arg198.

It belongs to the class I-like SAM-binding methyltransferase superfamily. Cx-SAM synthase family. In terms of assembly, homodimer.

It catalyses the reaction prephenate + S-adenosyl-L-methionine = carboxy-S-adenosyl-L-methionine + 3-phenylpyruvate + H2O. Catalyzes the conversion of S-adenosyl-L-methionine (SAM) to carboxy-S-adenosyl-L-methionine (Cx-SAM). The chain is Carboxy-S-adenosyl-L-methionine synthase from Haemophilus ducreyi (strain 35000HP / ATCC 700724).